Reading from the N-terminus, the 128-residue chain is Fluoride-specific ion channel FluC (128 aa).

4 helical membrane passes run L4–I24, G39–M59, F71–I91, and I99–I119. Residues G78 and T81 each contribute to the Na(+) site.

It belongs to the fluoride channel Fluc/FEX (TC 1.A.43) family.

It is found in the cell membrane. It carries out the reaction fluoride(in) = fluoride(out). With respect to regulation, na(+) is not transported, but it plays an essential structural role and its presence is essential for fluoride channel function. Fluoride-specific ion channel. Important for reducing fluoride concentration in the cell, thus reducing its toxicity. The chain is Fluoride-specific ion channel FluC from Clostridium perfringens (strain ATCC 13124 / DSM 756 / JCM 1290 / NCIMB 6125 / NCTC 8237 / Type A).